A 380-amino-acid chain; its full sequence is Cytochrome b (380 aa).

The next 4 membrane-spanning stretches (helical) occupy residues 33–53 (FGSL…FLAM), 77–98 (WLIR…YLHI), 113–133 (WNVG…GYVL), and 178–198 (FFAF…IHLL). H83 and H97 together coordinate heme b. Positions 182 and 196 each coordinate heme b. An a ubiquinone-binding site is contributed by H201. 4 helical membrane-spanning segments follow: residues 226 to 246 (YKDL…ALFS), 288 to 308 (LGGV…PALH), 320 to 340 (ITQL…WIGG), and 347 to 367 (FIII…TLIP).

It belongs to the cytochrome b family. The cytochrome bc1 complex contains 3 respiratory subunits (MT-CYB, CYC1 and UQCRFS1), 2 core proteins (UQCRC1 and UQCRC2) and probably 6 low-molecular weight proteins. Heme b is required as a cofactor.

It localises to the mitochondrion inner membrane. Its function is as follows. Component of the ubiquinol-cytochrome c reductase complex (complex III or cytochrome b-c1 complex) that is part of the mitochondrial respiratory chain. The b-c1 complex mediates electron transfer from ubiquinol to cytochrome c. Contributes to the generation of a proton gradient across the mitochondrial membrane that is then used for ATP synthesis. In Percopsis transmontana (Sand roller), this protein is Cytochrome b (mt-cyb).